The sequence spans 302 residues: Glutaminase (302 aa).

Substrate contacts are provided by serine 61, asparagine 111, glutamate 155, asparagine 162, tyrosine 186, tyrosine 238, and valine 256.

This sequence belongs to the glutaminase family. Homotetramer.

It catalyses the reaction L-glutamine + H2O = L-glutamate + NH4(+). The protein is Glutaminase of Pseudomonas savastanoi pv. phaseolicola (strain 1448A / Race 6) (Pseudomonas syringae pv. phaseolicola (strain 1448A / Race 6)).